The chain runs to 105 residues: Dynein axonemal light chain 4 (105 aa).

The protein belongs to the dynein light chain family. Consists of at least two heavy chains and a number of intermediate and light chains.

Its subcellular location is the cytoplasm. It is found in the cytoskeleton. It localises to the cilium axoneme. Functionally, force generating protein of respiratory cilia. Produces force towards the minus ends of microtubules. Dynein has ATPase activity. This chain is Dynein axonemal light chain 4 (DNAL4), found in Bos taurus (Bovine).